Consider the following 232-residue polypeptide: DOA4-independent degradation protein 4 (232 aa).

The stretch at P14–R97 forms a coiled coil. Residues L183–T232 form an interaction with VPS4 region. Positions I203–T232 are disordered. The MIT-interacting motif motif lies at D219–K229.

Belongs to the SNF7 family. In terms of assembly, core component of the ESCRT-III complex (endosomal sorting required for transport complex III). ESCRT-III appears to be sequentially assembled as a flat lattice on the endosome membrane and forms a transient 450 kDa complex that contains DID4, oligomerized SNF7, VPS20 and VPS24. SNF7 oligomerization into a membrane-associated filament is nucleated by association of SNF7 with VPS20; the process is terminated through association of VPS24, possibly by capping the SNF7 filament. VPS24 subsequently associates with DID4/VPS2.

It is found in the cytoplasm. The protein localises to the endosome membrane. Functionally, required for the sorting and concentration of proteins resulting in the entry of these proteins into the invaginating vesicles of the multivesicular body (MVB). Acts a component of the ESCRT-III complex, which appears to be critical for late steps in MVB sorting, such as membrane invagination and final cargo sorting and recruitment of late-acting components of the sorting machinery. The MVB pathway requires the sequential function of ESCRT-O, -I,-II and -III complex assemblies. Can directly stimulate VPS4 ATPase activity. The DID4/VPS2-VPS24 subcomplex is required for the VPS4-dependent dissociation of ESCRT-III. The sequence is that of DOA4-independent degradation protein 4 (DID4) from Saccharomyces cerevisiae (strain ATCC 204508 / S288c) (Baker's yeast).